A 159-amino-acid chain; its full sequence is NADH-quinone oxidoreductase subunit B (159 aa).

Positions 36, 37, 102, and 132 each coordinate [4Fe-4S] cluster.

The protein belongs to the complex I 20 kDa subunit family. In terms of assembly, NDH-1 is composed of 14 different subunits. Subunits NuoB, C, D, E, F, and G constitute the peripheral sector of the complex. [4Fe-4S] cluster serves as cofactor.

The protein localises to the cell inner membrane. It carries out the reaction a quinone + NADH + 5 H(+)(in) = a quinol + NAD(+) + 4 H(+)(out). NDH-1 shuttles electrons from NADH, via FMN and iron-sulfur (Fe-S) centers, to quinones in the respiratory chain. Couples the redox reaction to proton translocation (for every two electrons transferred, four hydrogen ions are translocated across the cytoplasmic membrane), and thus conserves the redox energy in a proton gradient. The chain is NADH-quinone oxidoreductase subunit B from Delftia acidovorans (strain DSM 14801 / SPH-1).